Reading from the N-terminus, the 306-residue chain is tRNA dimethylallyltransferase (306 aa).

ATP is bound at residue 6–13; the sequence is GPTASGKS. 8 to 13 contacts substrate; the sequence is TASGKS.

It belongs to the IPP transferase family. Monomer. Requires Mg(2+) as cofactor.

It carries out the reaction adenosine(37) in tRNA + dimethylallyl diphosphate = N(6)-dimethylallyladenosine(37) in tRNA + diphosphate. Its function is as follows. Catalyzes the transfer of a dimethylallyl group onto the adenine at position 37 in tRNAs that read codons beginning with uridine, leading to the formation of N6-(dimethylallyl)adenosine (i(6)A). This chain is tRNA dimethylallyltransferase, found in Sphingopyxis alaskensis (strain DSM 13593 / LMG 18877 / RB2256) (Sphingomonas alaskensis).